Here is a 531-residue protein sequence, read N- to C-terminus: Plant UBX domain-containing protein 11 (531 aa).

An N-acetylmethionine modification is found at M1. Positions A160–S173 are enriched in low complexity. Disordered stretches follow at residues A160–D316 and A441–R531. Polar residues-rich tracts occupy residues E174 to G190 and E201 to A214. The span at V290–E301 shows a compositional bias: basic and acidic residues. In terms of domain architecture, UBX spans K312–V390. Composition is skewed to polar residues over residues A441–N478 and T486–L496.

Interacts with CDC48A.

In Arabidopsis thaliana (Mouse-ear cress), this protein is Plant UBX domain-containing protein 11.